A 383-amino-acid polypeptide reads, in one-letter code: La protein homolog (383 aa).

The segment at 1-43 (MTEVEAKATATEETTKEEEEAPETTAEQTEESAQETSENVSKL) is disordered. Residues 15 to 33 (TKEEEEAPETTAEQTEESA) are compositionally biased toward acidic residues. The HTH La-type RNA-binding domain maps to 37–129 (SENVSKLEAS…RRHPERPLPE (93 aa)). One can recognise an RRM domain in the interval 141-228 (RTVYVKGFAP…RKMQDDYFEE (88 aa)). Positions 249–368 (HLPKGASVHL…RTPEGRQASR (120 aa)) constitute a xRRM domain. The disordered stretch occupies residues 343–383 (KDQQARRQASNARNKGRTPEGRQASRPPQEWRRKAKGGRGE).

The protein resides in the nucleus. Its subcellular location is the cytoplasm. Functionally, may be involved in transcription termination by RNA polymerase III. Binds RNA and DNA. Binds to the 3' end of the minus strand of Sindbis virus RNA. This may be significant for Sindbis virus RNA replication. The sequence is that of La protein homolog from Aedes albopictus (Asian tiger mosquito).